The chain runs to 251 residues: Adapter protein MecA (251 aa).

The protein belongs to the MecA family. In terms of assembly, homodimer.

In terms of biological role, enables the recognition and targeting of unfolded and aggregated proteins to the ClpC protease or to other proteins involved in proteolysis. The protein is Adapter protein MecA of Streptococcus agalactiae serotype III (strain NEM316).